The sequence spans 62 residues: Toxin Tst2 (62 aa).

The LCN-type CS-alpha/beta domain occupies Lys-1–Cys-62. Intrachain disulfides connect Cys-11/Cys-62, Cys-15/Cys-38, Cys-23/Cys-43, and Cys-27/Cys-45. Cysteine amide is present on Cys-62.

As to expression, expressed by the venom gland.

It is found in the secreted. Functionally, alpha toxins bind voltage-independently at site-3 of sodium channels (Nav) and inhibit the inactivation of the activated channels, thereby blocking neuronal transmission. Is toxic to mice. The polypeptide is Toxin Tst2 (Tityus stigmurus (Brazilian scorpion)).